Here is a 330-residue protein sequence, read N- to C-terminus: Putative glycosyltransferase ORF330 (330 aa).

This sequence belongs to the glycosyltransferase group 1 family. Glycosyltransferase 4 subfamily.

In Acidianus filamentous virus 2 (isolate Italy/Pozzuoli) (AFV-2), this protein is Putative glycosyltransferase ORF330.